We begin with the raw amino-acid sequence, 460 residues long: tRNA (guanine(10)-N(2))-methyltransferase TRMT11 (460 aa).

Position 2 is an N-acetylalanine (Ala-2).

The protein belongs to the class I-like SAM-binding methyltransferase superfamily. TRM11 methyltransferase family. In terms of assembly, part of the heterodimeric TRMT11-TRM112 methyltransferase complex; this complex forms an active tRNA methyltransferase, where TRMT112 acts as an activator of the catalytic subunit TRMT11.

It localises to the cytoplasm. It carries out the reaction guanosine(10) in tRNA + S-adenosyl-L-methionine = N(2)-methylguanosine(10) in tRNA + S-adenosyl-L-homocysteine + H(+). Functionally, catalytic subunit of the TRMT11-TRM112 methyltransferase complex, that specifically mediates the S-adenosyl-L-methionine-dependent N(2)-methylation of guanosine nucleotide at position 10 (m2G10) in tRNAs. This is one of the major tRNA (guanine-N(2))-methyltransferases. The protein is tRNA (guanine(10)-N(2))-methyltransferase TRMT11 of Bos taurus (Bovine).